A 449-amino-acid polypeptide reads, in one-letter code: Tol-Pal system protein TolB (449 aa).

The first 36 residues, 1 to 36, serve as a signal peptide directing secretion; it reads MDCPNMPLHINRRQMLLSAATAAGALALGPARDAFG.

Belongs to the TolB family. The Tol-Pal system is composed of five core proteins: the inner membrane proteins TolA, TolQ and TolR, the periplasmic protein TolB and the outer membrane protein Pal. They form a network linking the inner and outer membranes and the peptidoglycan layer.

The protein localises to the periplasm. Its function is as follows. Part of the Tol-Pal system, which plays a role in outer membrane invagination during cell division and is important for maintaining outer membrane integrity. The polypeptide is Tol-Pal system protein TolB (Rhodopseudomonas palustris (strain HaA2)).